Reading from the N-terminus, the 179-residue chain is SCAN domain-containing protein 1 (179 aa).

Residues 1–107 (MAATEPILAT…AGSRLGPETF (107 aa)) form a disordered region. The segment covering 52-80 (SPNAAVPEAIPTPRAAASAALELPLGPAP) has biased composition (low complexity). Residues 108–166 (RQRFRQFRYQDAAGPREAFRQLRELSRQWLRPDIRTKEQIVEMLVQEQLLAILPEAARA) form the SCAN box domain.

In terms of assembly, interacts with ZNF202.

It localises to the nucleus. In terms of biological role, may regulate transcriptional activity. In Pan paniscus (Pygmy chimpanzee), this protein is SCAN domain-containing protein 1 (SCAND1).